Here is a 365-residue protein sequence, read N- to C-terminus: MAIVSSNAASQRPRPDRGPDRVPNRVVDGARQAEDDRDPGRVGAKEDSLRPKRLADYIGQRELKQVLGIAVQAAVGRGEALDHVLLYGPPGLGKTTMAMVLAEELGVTCRITSAPALERPRDIVGLLVTLQPKDLLFIDEIHRLSRVAEELLYPAMEDRRLDLTVGKGSTARTRALDLPPFTLVGATTRAGALSSPLRDRFGLIQRLEFYGLEDLQAIVERAAGLLDLDLSAAACTEIARRCRGTPRIANRLLRRVRDVACVRACAGRIDQALVDEALTLHRVDGRGLDASDRRLMELLLQSHGGGPAGLDTLAAALGEDPATLESVVEPYLLQLGFLQRTPRGRVVTAAGRGHLGWPYPQEQAA.

Residues 1–10 (MAIVSSNAAS) are compositionally biased toward polar residues. Residues 1–48 (MAIVSSNAASQRPRPDRGPDRVPNRVVDGARQAEDDRDPGRVGAKEDS) are disordered. Composition is skewed to basic and acidic residues over residues 13–23 (PRPDRGPDRVP) and 31–48 (RQAE…KEDS). Positions 13 to 210 (PRPDRGPDRV…FGLIQRLEFY (198 aa)) are large ATPase domain (RuvB-L). ATP is bound by residues leucine 49, arginine 50, glycine 91, lysine 94, threonine 95, threonine 96, arginine 200, tyrosine 210, and arginine 247. Mg(2+) is bound at residue threonine 95. A small ATPAse domain (RuvB-S) region spans residues 211–282 (GLEDLQAIVE…LVDEALTLHR (72 aa)). The interval 285–365 (GRGLDASDRR…GWPYPQEQAA (81 aa)) is head domain (RuvB-H). 2 residues coordinate DNA: arginine 340 and arginine 345.

Belongs to the RuvB family. Homohexamer. Forms an RuvA(8)-RuvB(12)-Holliday junction (HJ) complex. HJ DNA is sandwiched between 2 RuvA tetramers; dsDNA enters through RuvA and exits via RuvB. An RuvB hexamer assembles on each DNA strand where it exits the tetramer. Each RuvB hexamer is contacted by two RuvA subunits (via domain III) on 2 adjacent RuvB subunits; this complex drives branch migration. In the full resolvosome a probable DNA-RuvA(4)-RuvB(12)-RuvC(2) complex forms which resolves the HJ.

The protein resides in the cytoplasm. The enzyme catalyses ATP + H2O = ADP + phosphate + H(+). Its function is as follows. The RuvA-RuvB-RuvC complex processes Holliday junction (HJ) DNA during genetic recombination and DNA repair, while the RuvA-RuvB complex plays an important role in the rescue of blocked DNA replication forks via replication fork reversal (RFR). RuvA specifically binds to HJ cruciform DNA, conferring on it an open structure. The RuvB hexamer acts as an ATP-dependent pump, pulling dsDNA into and through the RuvAB complex. RuvB forms 2 homohexamers on either side of HJ DNA bound by 1 or 2 RuvA tetramers; 4 subunits per hexamer contact DNA at a time. Coordinated motions by a converter formed by DNA-disengaged RuvB subunits stimulates ATP hydrolysis and nucleotide exchange. Immobilization of the converter enables RuvB to convert the ATP-contained energy into a lever motion, pulling 2 nucleotides of DNA out of the RuvA tetramer per ATP hydrolyzed, thus driving DNA branch migration. The RuvB motors rotate together with the DNA substrate, which together with the progressing nucleotide cycle form the mechanistic basis for DNA recombination by continuous HJ branch migration. Branch migration allows RuvC to scan DNA until it finds its consensus sequence, where it cleaves and resolves cruciform DNA. This chain is Holliday junction branch migration complex subunit RuvB, found in Synechococcus sp. (strain WH7803).